A 434-amino-acid polypeptide reads, in one-letter code: Glutamate-1-semialdehyde 2,1-aminomutase (434 aa).

Lys-266 carries the N6-(pyridoxal phosphate)lysine modification.

It belongs to the class-III pyridoxal-phosphate-dependent aminotransferase family. HemL subfamily. In terms of assembly, homodimer. Requires pyridoxal 5'-phosphate as cofactor.

The protein resides in the cytoplasm. It carries out the reaction (S)-4-amino-5-oxopentanoate = 5-aminolevulinate. Its pathway is porphyrin-containing compound metabolism; protoporphyrin-IX biosynthesis; 5-aminolevulinate from L-glutamyl-tRNA(Glu): step 2/2. The polypeptide is Glutamate-1-semialdehyde 2,1-aminomutase (Fusobacterium nucleatum subsp. nucleatum (strain ATCC 25586 / DSM 15643 / BCRC 10681 / CIP 101130 / JCM 8532 / KCTC 2640 / LMG 13131 / VPI 4355)).